Consider the following 46-residue polypeptide: Escargot/snail protein homolog (46 aa).

C2H2-type zinc fingers lie at residues 1–4, 8–30, and 36–46; these read IRTH, CKCP…TTHH, and FSCQHCNRAFA.

Belongs to the snail C2H2-type zinc-finger protein family.

Its subcellular location is the nucleus. The sequence is that of Escargot/snail protein homolog from Oryzias latipes (Japanese rice fish).